The following is a 238-amino-acid chain: Glyceraldehyde 3-phosphate phosphatase (238 aa).

Belongs to the HAD-like hydrolase superfamily. Mg(2+) serves as cofactor.

In terms of biological role, catalyzes the dephosphorylation of D,L-glyceraldehyde 3-phosphate in vitro. The chain is Glyceraldehyde 3-phosphate phosphatase from Pyrococcus abyssi (strain GE5 / Orsay).